The sequence spans 863 residues: Importin subunit beta-1 (863 aa).

19 HEAT repeats span residues 2–31 (NAGEFLAQTLSPDANVRLNAEKQLENAART), 33–62 (FAQYMVLLAQELANDNSMPYIRMAAGLALK), 85–124 (VEIKQQVKSLALQTLGSSEHQAGQSAAQLVAAIAAYELAT), 129–159 (DLMVTLVANVGEGQPSALKQHSLQTIGYICE), 170–201 (SNAILTAVVAGARKEEPDAAVRLAALGALYDS), 212–248 (EYERNYIMQVVCEATQSPEASIQTAAFGCLVKIMHLY), 253–299 (PFYM…EIQE), 314–360 (FARA…QVVG), 364–392 (VNPVLAFVEQNIQNPDWHQREAAVMAFGS), 399–439 (VAML…SSFV), 449–481 (LSPMVSALLQGLTDNPRIVANCCWAFMNLVCHF), 496–530 (YEAIIGSLLHVTDQKGNENNSRTSGYETLGTLITF), 536–586 (LPMI…IIRR), 592–630 (RTSSDQIMNLLLQTMQTAPKQSVVHEDVLLAIGAMMNSL), 635–671 (EVYVPSFVPFLSSALSNEQEYQLCSVAVGLVGDLARA), 677–715 (LPYCDDFMTRLVQDLQSSVLDRNVKPAILSCFSDIALAI), 720–767 (QTYL…ITQA), 778–815 (QPYVHSMFTLLNMITADPECSESLTRAALGLLGDLAES), and 822–861 (KSYFAADWVAALLNSGKTKISSQQTKDLARWATEQVKRQA). The Importin N-terminal domain occupies 21–101 (AEKQLENAAR…KSLALQTLGS (81 aa)).

This sequence belongs to the importin beta family. Importin beta-1 subfamily. As to quaternary structure, forms a complex with an importin alpha subunit. Interacts with Ran; interacts specifically with the GTP-bound form of Ran (GTP-Ran), protecting it from GTP hydrolysis and nucleotide exchange. Interacts with nucleoporins.

Its subcellular location is the cytoplasm. The protein localises to the nucleus envelope. It is found in the nucleus. The protein resides in the nuclear pore complex. Its function is as follows. Importin beta subunit that functions in nuclear protein import through association with the importin alpha subunit, which binds to the clasical nuclear localization signal (cNLS) in cargo substrates. Docking of the importin/substrate complex to the nuclear pore complex (NPC) is mediated by importin beta through binding to nucleoporin FxFG repeats and the complex is subsequently translocated through the pore by an energy requiring, Ran-dependent mechanism. At the nucleoplasmic side of the NPC, GTP-Ran binds to importin beta and the three components separate, leading to release of the cargo. Importin alpha and beta are re-exported from the nucleus to the cytoplasm where GTP hydrolysis releases Ran from importin beta. The directionality of nuclear import is thought to be conferred by an asymmetric distribution of the GTP- and GDP-bound forms of Ran between the cytoplasm and nucleus. The sequence is that of Importin subunit beta-1 from Schizosaccharomyces pombe (strain 972 / ATCC 24843) (Fission yeast).